The sequence spans 357 residues: Crh-like protein 1 (357 aa).

An N-terminal signal peptide occupies residues 1–17 (MMLPLLAVSAFASLGAA). The region spanning 20–220 (YTSCNPTNSL…WAGGETDYDE (201 aa)) is the GH16 domain. N-linked (GlcNAc...) asparagine glycosylation is found at Asn52 and Asn92. Glu109 serves as the catalytic Nucleophile. Glu113 serves as the catalytic Proton donor. Glu113 is a binding site for chitin. An N-linked (GlcNAc...) asparagine glycan is attached at Asn131. Residues Lys193, Trp197, and Thr208 each coordinate chitin. N-linked (GlcNAc...) asparagine glycans are attached at residues Asn242 and Asn257. Gly326 carries the GPI-anchor amidated glycine lipid modification. A propeptide spans 327 to 357 (SASAVFTGAAVTNLPSFFFTVFFALAIALAF) (removed in mature form). Residues 337-357 (VTNLPSFFFTVFFALAIALAF) form a helical membrane-spanning segment.

It belongs to the glycosyl hydrolase 16 family. CRH1 subfamily. Post-translationally, the GPI-like anchor contains a phosphoceramide lipid group. The anchor position has not been determined.

It localises to the cell membrane. The protein resides in the secreted. The protein localises to the cell wall. The enzyme catalyses Random endo-hydrolysis of N-acetyl-beta-D-glucosaminide (1-&gt;4)-beta-linkages in chitin and chitodextrins.. Its function is as follows. Dual chitinase/transglycosylase that plays a role in cell wall architecture. Chitinase and transglycosylase activities are coupled. Required for the polysaccharide cross-linking at the septa and the cell wall. More specifically, transfers chitin to 1,6-beta-glucan in the cell wall. The chain is Crh-like protein 1 from Aspergillus fumigatus (strain ATCC MYA-4609 / CBS 101355 / FGSC A1100 / Af293) (Neosartorya fumigata).